We begin with the raw amino-acid sequence, 422 residues long: Signal recognition particle receptor FtsY (422 aa).

Residues 39–86 (PERGVVDRSGGYTASSGITFSQTPTTQPAERIDTSGLPAVGDDATVPR) form a disordered region. Positions 50–66 (YTASSGITFSQTPTTQP) are enriched in polar residues. GTP contacts are provided by residues 230 to 237 (GVNGTGKT), 312 to 316 (DTAGR), and 374 to 377 (TKLD).

The protein belongs to the GTP-binding SRP family. FtsY subfamily. As to quaternary structure, part of the signal recognition particle protein translocation system, which is composed of SRP and FtsY.

It is found in the cell membrane. The protein localises to the cytoplasm. The enzyme catalyses GTP + H2O = GDP + phosphate + H(+). Its function is as follows. Involved in targeting and insertion of nascent membrane proteins into the cytoplasmic membrane. Acts as a receptor for the complex formed by the signal recognition particle (SRP) and the ribosome-nascent chain (RNC). The chain is Signal recognition particle receptor FtsY from Mycobacterium bovis (strain ATCC BAA-935 / AF2122/97).